Reading from the N-terminus, the 613-residue chain is Isocitrate dehydrogenase kinase/phosphatase (613 aa).

ATP-binding positions include 328–334 (APGIRGL) and Lys349. Asp384 is an active-site residue.

It belongs to the AceK family.

The protein resides in the cytoplasm. It carries out the reaction L-seryl-[isocitrate dehydrogenase] + ATP = O-phospho-L-seryl-[isocitrate dehydrogenase] + ADP + H(+). Functionally, bifunctional enzyme which can phosphorylate or dephosphorylate isocitrate dehydrogenase (IDH) on a specific serine residue. This is a regulatory mechanism which enables bacteria to bypass the Krebs cycle via the glyoxylate shunt in response to the source of carbon. When bacteria are grown on glucose, IDH is fully active and unphosphorylated, but when grown on acetate or ethanol, the activity of IDH declines drastically concomitant with its phosphorylation. The protein is Isocitrate dehydrogenase kinase/phosphatase of Cupriavidus necator (strain ATCC 17699 / DSM 428 / KCTC 22496 / NCIMB 10442 / H16 / Stanier 337) (Ralstonia eutropha).